Here is an 86-residue protein sequence, read N- to C-terminus: Large ribosomal subunit protein bL31B (86 aa).

The protein belongs to the bacterial ribosomal protein bL31 family. Type B subfamily. In terms of assembly, part of the 50S ribosomal subunit.

The polypeptide is Large ribosomal subunit protein bL31B (Saccharopolyspora erythraea (strain ATCC 11635 / DSM 40517 / JCM 4748 / NBRC 13426 / NCIMB 8594 / NRRL 2338)).